Consider the following 238-residue polypeptide: MSRLGLPEEPVRNSLLDDAKARLRKYDIGGKYSHLPYNKYSVLLPLVAKEGKLHLLFTVRSEKLRRAPGEVCFPGGKRDPTDMDDAATALREAQEEVGLRPHQVEVVCCLVPCLIDTDTLITPFVGLIDHNFQAQPNPAEVKDVFLVPLAYFLHPQVHDQHYVTRLGHRFINHIFEYTNPEDGVTYQIKGMTANLAVLVAFIILEKKPTFEVQFNLNDVLASSEELFLKVHKKATSRL.

The residue at position 20 (Lys-20) is an N6-succinyllysine. A Nudix hydrolase domain is found at 37-172 (YNKYSVLLPL…VTRLGHRFIN (136 aa)). The Nudix box motif lies at 77–98 (KRDPTDMDDAATALREAQEEVG). Mg(2+)-binding residues include Glu-92 and Glu-96. The Microbody targeting signal signature appears at 236–238 (SRL).

Belongs to the Nudix hydrolase family. PCD1 subfamily. As to quaternary structure, monomer. Requires Mn(2+) as cofactor. Mg(2+) is required as a cofactor. In terms of tissue distribution, expressed in liver, kidney, pancreas, pituitary, small intestine, spleen, heart and placenta. Weakly expressed in brain.

The protein resides in the peroxisome. The enzyme catalyses hexanoyl-CoA + H2O = hexanoyl-4'-phosphopantetheine + adenosine 3',5'-bisphosphate + 2 H(+). It carries out the reaction octanoyl-CoA + H2O = S-octanoyl-4'-phosphopantetheine + adenosine 3',5'-bisphosphate + 2 H(+). The catalysed reaction is butanoyl-CoA + H2O = S-butanoyl-4'-phosphopantetheine + adenosine 3',5'-bisphosphate + 2 H(+). It catalyses the reaction decanoyl-CoA + H2O = decanoyl-4'-phosphopantetheine + adenosine 3',5'-bisphosphate + 2 H(+). The enzyme catalyses dodecanoyl-CoA + H2O = S-dodecanoyl-4'-phosphopantetheine + adenosine 3',5'-bisphosphate + 2 H(+). It carries out the reaction tetradecanoyl-CoA + H2O = tetradecanoyl-4'-phosphopantetheine + adenosine 3',5'-bisphosphate + 2 H(+). The catalysed reaction is choloyl-CoA + H2O = S-choloyl-4'-phosphopantetheine + adenosine 3',5'-bisphosphate + 2 H(+). It catalyses the reaction 3alpha,7alpha,12alpha-trihydroxy-5beta-cholestan-26-oyl-CoA + H2O = 3alpha,7alpha,12alpha-trihydroxy-5beta-cholestan-26-oyl-4'-phosphopantetheine + adenosine 3',5'-bisphosphate + 2 H(+). The enzyme catalyses acetyl-CoA + H2O = S-acetyl-4'-phosphopantetheine + adenosine 3',5'-bisphosphate + 2 H(+). It carries out the reaction CoA + H2O = (R)-4'-phosphopantetheine + adenosine 3',5'-bisphosphate + 2 H(+). The catalysed reaction is propanoyl-CoA + H2O = propanoyl-4'-phosphopantetheine + adenosine 3',5'-bisphosphate + 2 H(+). It catalyses the reaction malonyl-CoA + H2O = malonyl-4'-phosphopantetheine + adenosine 3',5'-bisphosphate + 2 H(+). The enzyme catalyses succinyl-CoA + H2O = succinyl-4'-phosphopantetheine + adenosine 3',5'-bisphosphate + 2 H(+). It carries out the reaction a 5'-end CoA-ribonucleoside in mRNA + H2O = a 5'-end phospho-adenosine-phospho-ribonucleoside in mRNA + (R)-4'-phosphopantetheine + 2 H(+). Inhibited by fluoride. Functionally, fatty acyl-coenzyme A (CoA) diphosphatase that hydrolyzes fatty acyl-CoA to yield acyl-4'-phosphopantetheine and adenosine 3',5'-bisphosphate. Cleaves CoA, CoA esters and oxidized CoA with similar efficiencies. Preferentially hydrolyzes medium-chain acyl-CoAs and bile acid-CoAs. Has no activity toward NDP-sugars, CDP-alcohols, (deoxy)nucleoside 5'-triphosphates, nucleoside 5'-di or monophosphates, diadenosine polyphosphates, NAD, NADH, NADP, NADPH or thymidine-5'-monophospho-p-nitrophenyl ester. May be required to eliminate oxidized CoA from peroxisomes, or regulate CoA and acyl-CoA levels in this organelle in response to metabolic demand. Does not play a role in U8 snoRNA decapping activity. Binds U8 snoRNA. Exhibits decapping activity towards dpCoA-capped RNAs in vitro. This chain is Peroxisomal coenzyme A diphosphatase NUDT7, found in Homo sapiens (Human).